Reading from the N-terminus, the 418-residue chain is Aspartate aminotransferase 1 (418 aa).

Lys-264 carries the post-translational modification N6-(pyridoxal phosphate)lysine.

The protein belongs to the class-I pyridoxal-phosphate-dependent aminotransferase family. Homodimer. Pyridoxal 5'-phosphate serves as cofactor. Nodules, roots, stems and leaves, in decreasing order of aspartate aminotransferase 1 concentration. Is the predominant aspartate aminotransferase isoenzyme in roots.

The protein localises to the cytoplasm. It carries out the reaction L-aspartate + 2-oxoglutarate = oxaloacetate + L-glutamate. Its function is as follows. Important for the metabolism of amino acids and Krebs-cycle related organic acids. In plants, it is involved in nitrogen metabolism and in aspects of carbon and energy metabolism. This Medicago sativa (Alfalfa) protein is Aspartate aminotransferase 1 (AAT-1).